A 365-amino-acid chain; its full sequence is Formamidopyrimidine-DNA glycosylase (365 aa).

P2 (schiff-base intermediate with DNA) is an active-site residue. E3 serves as the catalytic Proton donor. The Proton donor; for beta-elimination activity role is filled by K61. Positions 121–150 (RGRLAGHGDGMDGTSRTGSTLPGTGGTENS) are disordered. The segment covering 134–150 (TSRTGSTLPGTGGTENS) has biased composition (polar residues). The DNA site is built by H186, R205, and R246. The segment at 331 to 365 (RVYGRGGQPCRHCGTTLATAQVAGRTTVFCPQCQR) adopts an FPG-type zinc-finger fold. R355 acts as the Proton donor; for delta-elimination activity in catalysis.

It belongs to the FPG family. In terms of assembly, monomer. Zn(2+) is required as a cofactor.

The catalysed reaction is Hydrolysis of DNA containing ring-opened 7-methylguanine residues, releasing 2,6-diamino-4-hydroxy-5-(N-methyl)formamidopyrimidine.. It carries out the reaction 2'-deoxyribonucleotide-(2'-deoxyribose 5'-phosphate)-2'-deoxyribonucleotide-DNA = a 3'-end 2'-deoxyribonucleotide-(2,3-dehydro-2,3-deoxyribose 5'-phosphate)-DNA + a 5'-end 5'-phospho-2'-deoxyribonucleoside-DNA + H(+). Involved in base excision repair of DNA damaged by oxidation or by mutagenic agents. Acts as a DNA glycosylase that recognizes and removes damaged bases. Has a preference for oxidized purines, such as 7,8-dihydro-8-oxoguanine (8-oxoG). Has AP (apurinic/apyrimidinic) lyase activity and introduces nicks in the DNA strand. Cleaves the DNA backbone by beta-delta elimination to generate a single-strand break at the site of the removed base with both 3'- and 5'-phosphates. In Nitratidesulfovibrio vulgaris (strain ATCC 29579 / DSM 644 / CCUG 34227 / NCIMB 8303 / VKM B-1760 / Hildenborough) (Desulfovibrio vulgaris), this protein is Formamidopyrimidine-DNA glycosylase.